The chain runs to 268 residues: 4-hydroxy-tetrahydrodipicolinate reductase (268 aa).

Residue 7 to 12 (GANGRM) coordinates NAD(+). R34 provides a ligand contact to NADP(+). NAD(+) is bound by residues 97–99 (GTT) and 121–124 (SENM). H155 acts as the Proton donor/acceptor in catalysis. Residue H156 coordinates (S)-2,3,4,5-tetrahydrodipicolinate. Catalysis depends on K159, which acts as the Proton donor. A (S)-2,3,4,5-tetrahydrodipicolinate-binding site is contributed by 165–166 (GT).

The protein belongs to the DapB family.

The protein resides in the cytoplasm. The catalysed reaction is (S)-2,3,4,5-tetrahydrodipicolinate + NAD(+) + H2O = (2S,4S)-4-hydroxy-2,3,4,5-tetrahydrodipicolinate + NADH + H(+). It catalyses the reaction (S)-2,3,4,5-tetrahydrodipicolinate + NADP(+) + H2O = (2S,4S)-4-hydroxy-2,3,4,5-tetrahydrodipicolinate + NADPH + H(+). It functions in the pathway amino-acid biosynthesis; L-lysine biosynthesis via DAP pathway; (S)-tetrahydrodipicolinate from L-aspartate: step 4/4. In terms of biological role, catalyzes the conversion of 4-hydroxy-tetrahydrodipicolinate (HTPA) to tetrahydrodipicolinate. The sequence is that of 4-hydroxy-tetrahydrodipicolinate reductase from Bartonella bacilliformis (strain ATCC 35685 / KC583 / Herrer 020/F12,63).